We begin with the raw amino-acid sequence, 182 residues long: Nucleoside-triphosphatase THEP1 (182 aa).

ATP is bound by residues 10–17 (GRPGIGKT) and 102–109 (VVVIDEIG).

It belongs to the THEP1 NTPase family.

The catalysed reaction is a ribonucleoside 5'-triphosphate + H2O = a ribonucleoside 5'-diphosphate + phosphate + H(+). In terms of biological role, has nucleotide phosphatase activity towards ATP, GTP, CTP, TTP and UTP. May hydrolyze nucleoside diphosphates with lower efficiency. This Thermofilum pendens (strain DSM 2475 / Hrk 5) protein is Nucleoside-triphosphatase THEP1.